The following is a 561-amino-acid chain: FAD-binding monooxygenase tazF (561 aa).

FAD-binding positions include 74–77 (TWLD), 86–87 (DI), and Tyr92. An NADP(+)-binding site is contributed by 84–86 (GCD). NADP(+) contacts are provided by residues 212-218 (NGSSALQ) and 235-236 (RH).

It belongs to the FAD-binding monooxygenase family. FAD serves as cofactor.

It functions in the pathway secondary metabolite biosynthesis. FAD-binding monooxygenase; part of the gene cluster that mediates the biosynthesis of azaterrilone A and other azaphilones, a class of fungal metabolites characterized by a highly oxygenated pyrano-quinone bicyclic core and exhibiting a broad range of bioactivities. The first step of the pathway begins with the non-reducing polyketide synthase tazA that assembles one acetyl-CoA starter unit, five malonyl-CoA units, and catalyzes a series of Claisen condensations, methylation, PT-mediated cyclization, and finally releases the first hexaketide precursor through the R-domain. The tazA product then undergoes reduction on its terminal ketone and the following pyran-ring formation by yet undetermined enzyme(s). Dehydration and enoyl reduction, possibly involving the trans-enoyl reductase tazE leads to the next intermediate. TazD is predicted as an acetyltransferase and might catalyze the acetylation steps leading to the synthesis of azaterrilone A. Azaterrilone A is not the final product of the taz pathway and both the highly reducing polyketide synthase tazB and the dual enzyme tazHJ catalyze late steps of the pathway, leading to the production of the 2 final stereoisomers that contain additional polyketide modification whose structures have still to be determined. This Aspergillus terreus (strain NIH 2624 / FGSC A1156) protein is FAD-binding monooxygenase tazF.